The primary structure comprises 691 residues: Protein simr-1 (691 aa).

The Tudor; degenerate domain occupies 139–204 (EAEITPGTIY…TLFHLGKFTI (66 aa)). Disordered regions lie at residues 547–573 (TGPCGSNTSRPTAQNTANSSINQDMSI) and 588–618 (DNLNDTENWPNSEREQSATEMESGAEATTNS). Polar residues-rich tracts occupy residues 549 to 573 (PCGSNTSRPTAQNTANSSINQDMSI) and 588 to 598 (DNLNDTENWPN).

It is found in the cytoplasm. The protein resides in the perinuclear region. Functionally, acts downstream of piRNA production to promote mediator complex-dependent endogenous siRNA biogenesis from piRNA-target mRNAs in the RNA interference pathway in germ cells. Not required to identify target mRNA by the piRNA pathway. Plays a role in both spermatogenesis and oogenesis and in maintaining fertility over multiple generations, probably by directing mutator-dependent silencing to piRNA-targeted genes. The sequence is that of Protein simr-1 from Caenorhabditis elegans.